The following is a 359-amino-acid chain: Alanine racemase (359 aa).

Lys-34 (proton acceptor; specific for D-alanine) is an active-site residue. An N6-(pyridoxal phosphate)lysine modification is found at Lys-34. Residue Arg-129 coordinates substrate. Tyr-255 serves as the catalytic Proton acceptor; specific for L-alanine. Substrate is bound at residue Met-303.

This sequence belongs to the alanine racemase family. The cofactor is pyridoxal 5'-phosphate.

The catalysed reaction is L-alanine = D-alanine. Its pathway is amino-acid biosynthesis; D-alanine biosynthesis; D-alanine from L-alanine: step 1/1. Catalyzes the interconversion of L-alanine and D-alanine. May also act on other amino acids. The protein is Alanine racemase (alr) of Shigella dysenteriae serotype 1 (strain Sd197).